We begin with the raw amino-acid sequence, 305 residues long: GPI-anchored hemophore cfmA (305 aa).

The signal sequence occupies residues 1-18 (MKASVSLLLLSAASMASA). The 93-residue stretch at 19 to 111 (AMSVSQCAQM…GSGSGSDSGS (93 aa)) folds into the CFEM domain. Intrachain disulfides connect cysteine 25–cysteine 68, cysteine 29–cysteine 63, cysteine 42–cysteine 49, and cysteine 51–cysteine 84. Residue aspartate 46 participates in heme binding. The tract at residues 92-287 (TATGAGGSSS…STGNVAPRGA (196 aa)) is disordered. Residues 95–149 (GAGGSSSGSGSGSDSGSGSGSGSGSGSGSGSGSGSSSGSGSGSGSGSGSGSGSNS) show a composition bias toward gly residues. Low complexity-rich tracts occupy residues 150–186 (GSGS…NSTT), 196–259 (GASS…TATG), and 267–287 (GSAS…PRGA). N-linked (GlcNAc...) asparagine glycosylation is found at asparagine 183, asparagine 203, asparagine 237, asparagine 243, and asparagine 275. Serine 276 carries the GPI-like-anchor amidated serine lipid modification. Residues 277-305 (SSTGNVAPRGAVVGSGAVGALALAALIIL) constitute a propeptide, removed in mature form.

This sequence belongs to the RBT5 family. The GPI-like anchor contains a phosphoceramide lipid group. Post-translationally, the GPI-anchor is attached to the protein in the endoplasmic reticulum and serves to target the protein to the cell surface. There, the glucosamine-inositol phospholipid moiety is cleaved off and the GPI-modified mannoprotein is covalently attached via its lipidless GPI glycan remnant to the 1,6-beta-glucan of the outer cell wall layer.

Its subcellular location is the secreted. The protein localises to the cell wall. The protein resides in the cell membrane. In terms of biological role, GPI-anchored cell wall protein involved in stabilizing the cell wall. Not implicated in virulence, heme uptake and biofilm formation. This Aspergillus fumigatus (strain ATCC MYA-4609 / CBS 101355 / FGSC A1100 / Af293) (Neosartorya fumigata) protein is GPI-anchored hemophore cfmA.